The primary structure comprises 313 residues: 3'-5' exoribonuclease YhaM (313 aa).

In terms of domain architecture, HD spans 163 to 279 (HVVSMLRLAK…LHQIDLMDAS (117 aa)).

Belongs to the YhaM family.

In terms of biological role, shows a 3'-5' exoribonuclease activity. The sequence is that of 3'-5' exoribonuclease YhaM from Listeria monocytogenes serotype 4b (strain CLIP80459).